An 838-amino-acid polypeptide reads, in one-letter code: Protein kintoun (838 aa).

5 disordered regions span residues 106–125 (RPKNEVATDPSSGSRGLNWS), 212–238 (NPTAEEQEPHPLAHMFPTKPPAPGKPE), 370–411 (LRHF…TSSP), 557–696 (NAPL…DSCS), and 776–838 (QQRR…EMDD). Residues 114–125 (DPSSGSRGLNWS) show a composition bias toward polar residues. Over residues 370–380 (LRHFSREDSGV) the composition is skewed to basic and acidic residues. Ser-378 carries the phosphoserine modification. A compositionally biased stretch (acidic residues) spans 389–398 (PVEEDPDGEL). Residues 557-572 (NAPLDVEFERNQEGHA) show a composition bias toward basic and acidic residues. The span at 583–592 (EEEEEEEDKE) shows a compositional bias: acidic residues. The span at 601-611 (DQQQQQQVQNK) shows a compositional bias: low complexity. Basic residues-rich tracts occupy residues 612–623 (KSGKKQRKRNKK) and 673–683 (RSHRGILKRFS). Ser-781 carries the post-translational modification Phosphoserine. Over residues 789-802 (EETRGSALKQKENP) the composition is skewed to basic and acidic residues.

It belongs to the PIH1 family. Kintoun subfamily. In terms of assembly, interacts with Pp1alpha-96A, Pp1-87B, Pp1-13C and flw.

The protein localises to the cytoplasm. Its function is as follows. Required for cytoplasmic pre-assembly of axonemal dyneins, thereby playing a central role in motility in cilia and flagella. Involved in pre-assembly of dynein arm complexes in the cytoplasm before intraflagellar transport loads them for the ciliary compartment. The chain is Protein kintoun from Drosophila sechellia (Fruit fly).